We begin with the raw amino-acid sequence, 963 residues long: Protein bicaudal C homolog 1-A (963 aa).

The tract at residues 1-48 is disordered; sequence MAAQCESIGGDMNQSDPGSNSERSADSPVPGSEDDSPHDPEWREERFR. Polar residues predominate over residues 12–22; the sequence is MNQSDPGSNSE. The span at 35–48 shows a compositional bias: basic and acidic residues; sequence DSPHDPEWREERFR. 2 KH domains span residues 128-195 and 280-344; these read RVTL…RVRI and PVST…RQYL. Over residues 592–601 the composition is skewed to polar residues; sequence EASRQSNNHS. Disordered stretches follow at residues 592–613, 668–713, and 767–834; these read EASRQSNNHSSAEEVNSKTDPE, ERLL…TSQS, and LRRA…NKSA. Basic and acidic residues-rich tracts occupy residues 602–612 and 683–696; these read SAEEVNSKTDP and VTDKKAPGSERAAE. The segment covering 784–797 has biased composition (low complexity); the sequence is ENSSLSRSNSREQL. The span at 812 to 824 shows a compositional bias: polar residues; sequence IDSSQNDYSSSIG. Positions 862–925 constitute an SAM domain; the sequence is FKGSDLPELF…LLAISELNKN (64 aa).

This sequence belongs to the BicC family.

Functionally, putative RNA-binding protein. May be involved in regulating gene expression during embryonic development. Seems to be involved in endoderm formation. Ectopic expression results in endoderm formation in the absence of mesoderm induction. The sequence is that of Protein bicaudal C homolog 1-A (bicc1-a) from Xenopus laevis (African clawed frog).